Here is a 223-residue protein sequence, read N- to C-terminus: Small ribosomal subunit protein uS5 (223 aa).

Residues 1–15 (MTEAVAAEATETAPA) show a composition bias toward low complexity. Positions 1–51 (MTEAVAAEATETAPATDDRRGGRRGERGDRGQGRGDRGGRGGRDGGREAEK) are disordered. The segment covering 16–51 (TDDRRGGRRGERGDRGQGRGDRGGRGGRDGGREAEK) has biased composition (basic and acidic residues). Residues 54–117 (FVERVVTINR…EEAKKSFFRV (64 aa)) form the S5 DRBM domain.

Belongs to the universal ribosomal protein uS5 family. As to quaternary structure, part of the 30S ribosomal subunit. Contacts proteins S4 and S8.

With S4 and S12 plays an important role in translational accuracy. Functionally, located at the back of the 30S subunit body where it stabilizes the conformation of the head with respect to the body. This is Small ribosomal subunit protein uS5 from Paenarthrobacter aurescens (strain TC1).